The sequence spans 441 residues: Transcriptional regulatory protein ZraR (441 aa).

Residues 7–121 form the Response regulatory domain; that stretch reads DILVVDDDVS…RLQETLEKAL (115 aa). D56 bears the 4-aspartylphosphate mark. Residues 141–370 form the Sigma-54 factor interaction domain; sequence MIGSSPAMQH…LENAIERAVV (230 aa). Residues G172, T173, R329, and R359 each coordinate ATP. A DNA-binding region (H-T-H motif) is located at residues 421–440; it reads KTEAARQLGITRKTLLAKLS.

Forms homohexamers in the crystal structure. However, the dimerization interface between DNA-binding domains observed in the crystal structure suggests that dodecamers, rather than hexamers, might be the functionally important oligomer. In terms of processing, phosphorylated by ZraS.

It localises to the cytoplasm. Its activity is regulated as follows. Activity of the ZraS/ZraR two-component system is repressed by the zinc-bound form of ZraP, which probably interacts with the periplasmic region of ZraS. In terms of biological role, part of the Zra signaling pathway, an envelope stress response (ESR) system composed of the periplasmic accessory protein ZraP, the histidine kinase ZraS and the transcriptional regulator ZraR. The ZraPSR system contributes to antibiotic resistance and is important for membrane integrity in the presence of membrane-targeting biocides. ZraR is a member of the two-component regulatory system ZraS/ZraR. When activated by ZraS, acts in conjunction with sigma-54 to regulate the expression of zraP in the presence of high Zn(2+) or Pb(2+) concentrations. Also positively autoregulates the expression of the zraSR operon. The chain is Transcriptional regulatory protein ZraR from Salmonella typhimurium (strain LT2 / SGSC1412 / ATCC 700720).